We begin with the raw amino-acid sequence, 1623 residues long: Histone-lysine N-methyltransferase set-9 (1623 aa).

Disordered stretches follow at residues 1-102 (MADG…APQQ), 112-131 (AADARPLTEQEQLAAERPTE), 198-227 (EDAVGPGSPGTQYRRNQQAGGGLPSTSVAS), 448-600 (QRPG…VLRP), and 645-781 (TGQS…DEAA). The span at 62–71 (HQMENQEFYH) shows a compositional bias: basic and acidic residues. The span at 77 to 100 (EPQQIPQIPVFQPAAYNPPNYVAP) shows a compositional bias: low complexity. Over residues 206-227 (PGTQYRRNQQAGGGLPSTSVAS) the composition is skewed to polar residues. Residues 554–573 (MTQEEKNAHFARLTTDKEKP) are compositionally biased toward basic and acidic residues. The span at 587–597 (PHVPPPPPPLV) shows a compositional bias: pro residues. The span at 645 to 669 (TGQSGSSAAARQRTVSGSAARAQTY) shows a compositional bias: polar residues. The segment covering 723-733 (HRPRGRPKGTR) has biased composition (basic residues). Over residues 772–781 (SESEGIDEAA) the composition is skewed to acidic residues. Residues 786 to 834 (TMRCHCGMDHGDGDTIECEGCKTWQHMACMGLTLKSNTSKYKCEMCLPR) form a PHD-type zinc finger. Residues 857-895 (AARKQKRKSEPVEQKQKSSQPSTSRKSAPMALQQPAEPR) form a disordered region. The span at 873–882 (KSSQPSTSRK) shows a compositional bias: polar residues. Residues 965–1056 (MSSEVKRQPG…RNTEVTLPFD (92 aa)) enclose the SET domain. 2 stretches are compositionally biased toward basic and acidic residues: residues 1089-1157 (AERH…KKME) and 1172-1194 (AREERRIQQAEEMFRRQEEEGKR). Disordered regions lie at residues 1089 to 1318 (AERH…NVAP) and 1356 to 1623 (LLAG…TRWN). Residues 1093–1201 (RAMDHKKQEA…GKRKEARRRS (109 aa)) are a coiled coil. Residues 1242–1252 (TTQPSTSSFAT) show a composition bias toward polar residues. The span at 1282-1293 (ATTVATPKATTA) shows a compositional bias: low complexity. Residues 1364–1401 (FSEVRAQIEEENRMKERSRKREAKKKAVEKEKKEHRKE) adopt a coiled-coil conformation. Composition is skewed to basic and acidic residues over residues 1365 to 1378 (SEVRAQIEEENRMK), 1388 to 1406 (KKAVEKEKKEHRKEPKKTN), 1413 to 1429 (KSEKAVEKAVEKVEKKP), and 1447 to 1464 (KKTEEVDGIEREASESSS). Over residues 1533 to 1544 (SSSNTAPTTTIA) the composition is skewed to polar residues.

The protein belongs to the class V-like SAM-binding methyltransferase superfamily. In terms of tissue distribution, predominantly expressed in the germline (at protein level).

The protein localises to the nucleus. The catalysed reaction is L-lysyl-[histone] + S-adenosyl-L-methionine = N(6)-methyl-L-lysyl-[histone] + S-adenosyl-L-homocysteine + H(+). Functionally, histone methyltransferase. Might play a role in transcriptional regulation. Together with set-26, negatively regulates lifespan in a germline-independent, partially daf-16-dependent fashion. Together with set-26, plays a role in germline development and maintenance and might play a role in the restriction of the trimethylation mark on histone H3 'Lys-4'(H3K4me3) to target genes specifically in the germline. The sequence is that of Histone-lysine N-methyltransferase set-9 from Caenorhabditis elegans.